The primary structure comprises 456 residues: Putative gluconeogenesis factor (456 aa).

The protein belongs to the gluconeogenesis factor family.

Its subcellular location is the cytoplasm. Its function is as follows. Required for morphogenesis under gluconeogenic growth conditions. The polypeptide is Putative gluconeogenesis factor (Nostoc sp. (strain PCC 7120 / SAG 25.82 / UTEX 2576)).